Consider the following 255-residue polypeptide: Triosephosphate isomerase (255 aa).

A substrate-binding site is contributed by Asn-9–Lys-11. His-95 (electrophile) is an active-site residue. Glu-167 (proton acceptor) is an active-site residue. Substrate is bound by residues Gly-173, Ser-212, and Gly-233–Gly-234.

It belongs to the triosephosphate isomerase family. As to quaternary structure, homodimer.

The protein resides in the cytoplasm. It catalyses the reaction D-glyceraldehyde 3-phosphate = dihydroxyacetone phosphate. It functions in the pathway carbohydrate biosynthesis; gluconeogenesis. It participates in carbohydrate degradation; glycolysis; D-glyceraldehyde 3-phosphate from glycerone phosphate: step 1/1. In terms of biological role, involved in the gluconeogenesis. Catalyzes stereospecifically the conversion of dihydroxyacetone phosphate (DHAP) to D-glyceraldehyde-3-phosphate (G3P). The protein is Triosephosphate isomerase of Sodalis glossinidius (strain morsitans).